The following is a 180-amino-acid chain: Beta-lactoglobulin (180 aa).

Residues 1-18 form the signal peptide; it reads MKCLLLALGLALACAAQA. 3 disulfide bridges follow: C84/C178, C124/C137, and C124/C139.

It belongs to the calycin superfamily. Lipocalin family. In terms of assembly, under physiological conditions beta-lactoglobulin exists as an equilibrium mixture of monomeric and dimeric forms. Interaction with LMBR1L is controversial. In terms of processing, alternate disulfide bonds occur in equal amounts. Synthesized in mammary gland and secreted in milk.

It localises to the secreted. Functionally, primary component of whey, it binds retinol and is probably involved in the transport of that molecule. In Bubalus bubalis (Domestic water buffalo), this protein is Beta-lactoglobulin (LGB).